We begin with the raw amino-acid sequence, 889 residues long: F-BAR domain only protein 1 (889 aa).

Residues 1 to 248 form the F-BAR domain; it reads MSYFGEHFWG…NIENVSVEML (248 aa). The segment at 1 to 275 is mediates membrane-binding; sequence MSYFGEHFWG…LDFEAYSAAA (275 aa). Residues 156-195 adopt a coiled-coil conformation; it reads TSQKEMDKAETKTKKAAESLRRSVEKYNSARADFEQKMLD. Residues 267–442 form a mediates interaction with the adaptor protein complex AP-2 region; that stretch reads DFEAYSAAAL…KNLFGPPLES (176 aa). Residues 294–352 form a disordered region; the sequence is LSRREREPEPPAAVDFLEPDSGTCPEVDEEGFTVRPDVTQNSTAEPSRFSSSDSDFDDE. Residues S295, S347, and S372 each carry the phosphoserine modification. The tract at residues 382–596 is disordered; the sequence is ATAGSLILPP…SPLGSSAAST (215 aa). Over residues 450 to 469 the composition is skewed to low complexity; that stretch reads TGSSSLGFTSSPSPFSSSSP. The span at 496 to 511 shows a compositional bias: pro residues; sequence PGTPQSPPSCRAPPPE. S530 is subject to Phosphoserine. Low complexity predominate over residues 580–596; the sequence is LSRSLSPSPLGSSAAST. The segment at 609–889 is mediates interaction with AGFG1, CALM, DAB2, EPS15, EPS15R, ITSN1 and clathrin; that stretch reads HGVSRGPSPV…FATGMYLVSC (281 aa). S616 is subject to Phosphoserine. The region spanning 625–888 is the MHD domain; the sequence is ALPIATAFTE…RFATGMYLVS (264 aa). The disordered stretch occupies residues 826–849; the sequence is AGGSGRLSASWEPLSGPSTPSPVA.

Belongs to the FCHO family. In terms of assembly, may oligomerize and form homotetramer. Interacts with AP2A2 and AP2B1; 2 subunits of the adaptor protein complex AP-2. Interacts with DAB2. Interacts with clathrin (CLTC or CLTCL1). Interacts with EPS15, EPS15R and ITSN1. Interacts with AGFG1 and CALM. May interact with ACVR1; linking this receptor to clathrin-mediated endocytosis. As to expression, predominantly expressed in lymphoid cells.

The protein resides in the membrane. The protein localises to the clathrin-coated pit. Its function is as follows. Functions in an early step of clathrin-mediated endocytosis. Has both a membrane binding/bending activity and the ability to recruit proteins essential to the formation of functional clathrin-coated pits. May regulate Bmp signaling by regulating clathrin-mediated endocytosis of Bmp receptors. Involved in the regulation of T-cell poliferation and activation. Affects TCR clustering upon receptor triggering and modulates its internalisation, playing a role in TCR-dependent T-cell activation. In Homo sapiens (Human), this protein is F-BAR domain only protein 1.